A 300-amino-acid chain; its full sequence is NAD kinase (300 aa).

The active-site Proton acceptor is the D75. NAD(+) contacts are provided by residues 75 to 76, 149 to 150, R177, D179, 190 to 195, A214, and Q248; these read DG, ND, and TAYALS.

Belongs to the NAD kinase family. The cofactor is a divalent metal cation.

It is found in the cytoplasm. The catalysed reaction is NAD(+) + ATP = ADP + NADP(+) + H(+). Functionally, involved in the regulation of the intracellular balance of NAD and NADP, and is a key enzyme in the biosynthesis of NADP. Catalyzes specifically the phosphorylation on 2'-hydroxyl of the adenosine moiety of NAD to yield NADP. This chain is NAD kinase, found in Paraburkholderia phymatum (strain DSM 17167 / CIP 108236 / LMG 21445 / STM815) (Burkholderia phymatum).